A 380-amino-acid polypeptide reads, in one-letter code: Epoxyqueuosine reductase (380 aa).

Asp-139 functions as the Proton donor in the catalytic mechanism. The region spanning 181–213 is the 4Fe-4S ferredoxin-type 1 domain; that stretch reads IPFEPDDPLLDSCGDCTICVDRCPTSALVGNGQ. 8 residues coordinate [4Fe-4S] cluster: Cys-193, Cys-196, Cys-199, Cys-203, Cys-219, Cys-245, Cys-248, and Cys-252. Positions 234–263 constitute a 4Fe-4S ferredoxin-type 2 domain; it reads YRYKIGNRLYGCDTCQQVCPKNRGINTEQD.

The protein belongs to the QueG family. In terms of assembly, monomer. Cob(II)alamin is required as a cofactor. The cofactor is [4Fe-4S] cluster.

It is found in the cytoplasm. The catalysed reaction is epoxyqueuosine(34) in tRNA + AH2 = queuosine(34) in tRNA + A + H2O. Its pathway is tRNA modification; tRNA-queuosine biosynthesis. In terms of biological role, catalyzes the conversion of epoxyqueuosine (oQ) to queuosine (Q), which is a hypermodified base found in the wobble positions of tRNA(Asp), tRNA(Asn), tRNA(His) and tRNA(Tyr). In Staphylococcus aureus (strain NCTC 8325 / PS 47), this protein is Epoxyqueuosine reductase.